Here is a 369-residue protein sequence, read N- to C-terminus: DNA replication and repair protein RecF (369 aa).

ATP is bound at residue 30–37; it reads GQNAQGKT.

This sequence belongs to the RecF family.

It localises to the cytoplasm. Its function is as follows. The RecF protein is involved in DNA metabolism; it is required for DNA replication and normal SOS inducibility. RecF binds preferentially to single-stranded, linear DNA. It also seems to bind ATP. The polypeptide is DNA replication and repair protein RecF (Acetivibrio thermocellus (strain ATCC 27405 / DSM 1237 / JCM 9322 / NBRC 103400 / NCIMB 10682 / NRRL B-4536 / VPI 7372) (Clostridium thermocellum)).